The primary structure comprises 1005 residues: Small G protein signaling modulator 2 (1005 aa).

The RUN domain occupies H34–H191. Disordered stretches follow at residues Q95 to A121 and H205 to E236. A phosphoserine mark is found at S402 and L444. Residues G566–R938 form the Rab-GAP TBC domain. Disordered stretches follow at residues F657–P687 and G729–L761. The segment covering E672 to E681 has biased composition (basic and acidic residues). Residues F730–S740 show a composition bias toward acidic residues.

This sequence belongs to the RUTBC family. In terms of assembly, interacts with RAB4A, RAB11A, RAP1A, RAP1B, RAP2A and RAP2B. No interaction with RAB27A. Interacts with RAB9A. As to expression, widely expressed.

It localises to the cytoplasm. The protein resides in the melanosome. Its function is as follows. Possesses GTPase activator activity towards RAB32, RAB33B and RAB38. Regulates the trafficking of melanogenic enzymes TYR, TYRP1 and DCT/TYRP2 to melanosomes in melanocytes by inactivating RAB32 and RAB38. Inhibits RAB32 and RAB38 activation both directly by promoting their GTPase activity and indirectly by disrupting the RAB9A-HPS4 interaction which is required for RAB32/38 activation. This chain is Small G protein signaling modulator 2 (Sgsm2), found in Mus musculus (Mouse).